A 229-amino-acid chain; its full sequence is Probable ribonuclease H (229 aa).

An RNase H type-1 domain is found at 42 to 164 (LQDISLEFDK…ADFLANSAAK (123 aa)). Positions 60, 87, and 156 each coordinate a divalent metal cation.

Belongs to the RNase H family. Requires a divalent metal cation as cofactor.

The enzyme catalyses Endonucleolytic cleavage to 5'-phosphomonoester.. Endonuclease that specifically degrades the RNA of RNA-DNA hybrids. The protein is Probable ribonuclease H (RNH1) of Acanthamoeba polyphaga mimivirus (APMV).